We begin with the raw amino-acid sequence, 365 residues long: Outer membrane porin protein LC (365 aa).

A signal peptide spans 1–23 (MKKLTVAISAVAASVLMAMSAQA).

It belongs to the Gram-negative porin family. In terms of assembly, homotrimer.

It localises to the host cell outer membrane. Forms pores that allow passive diffusion of small molecules across the host cell outer membrane. This Enterobacteria phage PA-2 (Bacteriophage PA-2) protein is Outer membrane porin protein LC (LC).